We begin with the raw amino-acid sequence, 89 residues long: Small ribosomal subunit protein uS15 (89 aa).

This sequence belongs to the universal ribosomal protein uS15 family. As to quaternary structure, part of the 30S ribosomal subunit. Forms a bridge to the 50S subunit in the 70S ribosome, contacting the 23S rRNA.

In terms of biological role, one of the primary rRNA binding proteins, it binds directly to 16S rRNA where it helps nucleate assembly of the platform of the 30S subunit by binding and bridging several RNA helices of the 16S rRNA. Forms an intersubunit bridge (bridge B4) with the 23S rRNA of the 50S subunit in the ribosome. The protein is Small ribosomal subunit protein uS15 of Granulibacter bethesdensis (strain ATCC BAA-1260 / CGDNIH1).